A 356-amino-acid chain; its full sequence is Tyrosine recombinase XerS (356 aa).

One can recognise a Core-binding (CB) domain in the interval 16-121; it reads IMPWYVLDYY…ALSSLYKYLT (106 aa). Residues 169–354 enclose the Tyr recombinase domain; the sequence is AFLDYVDKEY…VNDEQKNALD (186 aa). Catalysis depends on residues Arg-210, Lys-234, His-306, Arg-309, and His-332. Tyr-341 serves as the catalytic O-(3'-phospho-DNA)-tyrosine intermediate.

Belongs to the 'phage' integrase family. XerS subfamily.

Its subcellular location is the cytoplasm. FtsK is required for recombination. Functionally, site-specific tyrosine recombinase, which acts by catalyzing the cutting and rejoining of the recombining DNA molecules. Essential to convert dimers of the bacterial chromosome into monomers to permit their segregation at cell division. The sequence is that of Tyrosine recombinase XerS from Streptococcus pyogenes serotype M2 (strain MGAS10270).